Here is a 127-residue protein sequence, read N- to C-terminus: uncharacterized protein (127 aa).

Residues Met-1–Ser-26 form the signal peptide.

This is an uncharacterized protein from Archaeoglobus fulgidus (strain ATCC 49558 / DSM 4304 / JCM 9628 / NBRC 100126 / VC-16).